Reading from the N-terminus, the 561-residue chain is Putative transport protein AHA_2450 (561 aa).

The next 5 membrane-spanning stretches (helical) occupy residues 8–28 (LLHQ…LLLG), 37–57 (IGNT…GFEF), 66–86 (FMLF…SVFL), 90–110 (IHYI…TVGL), and 161–181 (NMGI…MLVV). RCK C-terminal domains lie at 206–291 (SDNE…NYRN) and 293–376 (KEVF…KIGF). Helical transmembrane passes span 386–406 (LVAF…SLVF), 409–429 (LEFG…MGYL), 450–470 (LGLA…ILDH), 476–496 (AVVL…GYLF), and 541–561 (TYAV…GFWF).

It belongs to the AAE transporter (TC 2.A.81) family. YbjL subfamily.

It localises to the cell membrane. The chain is Putative transport protein AHA_2450 from Aeromonas hydrophila subsp. hydrophila (strain ATCC 7966 / DSM 30187 / BCRC 13018 / CCUG 14551 / JCM 1027 / KCTC 2358 / NCIMB 9240 / NCTC 8049).